Reading from the N-terminus, the 138-residue chain is ATP synthase epsilon chain (138 aa).

It belongs to the ATPase epsilon chain family. F-type ATPases have 2 components, CF(1) - the catalytic core - and CF(0) - the membrane proton channel. CF(1) has five subunits: alpha(3), beta(3), gamma(1), delta(1), epsilon(1). CF(0) has three main subunits: a, b and c.

The protein localises to the cell membrane. Functionally, produces ATP from ADP in the presence of a proton gradient across the membrane. In Streptococcus suis (strain 98HAH33), this protein is ATP synthase epsilon chain.